The chain runs to 189 residues: GMP synthase [glutamine-hydrolyzing] subunit A (189 aa).

The Glutamine amidotransferase type-1 domain occupies 5-189; the sequence is KILVVNNYGQ…TNFFEVCDRY (185 aa). The active-site Nucleophile is the Cys79. Active-site residues include His166 and Glu168.

As to quaternary structure, heterodimer composed of a glutamine amidotransferase subunit (A) and a GMP-binding subunit (B).

It carries out the reaction XMP + L-glutamine + ATP + H2O = GMP + L-glutamate + AMP + diphosphate + 2 H(+). It functions in the pathway purine metabolism; GMP biosynthesis; GMP from XMP (L-Gln route): step 1/1. Functionally, catalyzes the synthesis of GMP from XMP. The protein is GMP synthase [glutamine-hydrolyzing] subunit A of Methanosarcina acetivorans (strain ATCC 35395 / DSM 2834 / JCM 12185 / C2A).